The primary structure comprises 173 residues: MAAMASFGALALLLLSGLSCCSAEACLEPQITPSYYTTSDAVISTETVFIVEISLTCKNRVQNMALYADVSGKQFPVTRGQDVGRYQVSWSLEHKSAHAGTYEVRFFDEESYSLLRKAQRNNEDVSIIPPLFTVSVDHRGTWNGPWVSTEVLAAAIGIVIYYLAFSAKSHIQA.

An N-terminal signal peptide occupies residues 1–23; it reads MAAMASFGALALLLLSGLSCCSA. Topologically, residues 24 to 144 are lumenal; sequence EACLEPQITP…SVDHRGTWNG (121 aa). Residues Cys-26 and Cys-57 are joined by a disulfide bond. A Glycyl lysine isopeptide (Lys-Gly) (interchain with G-Cter in ubiquitin) cross-link involves residue Lys-73. Residues 145–165 traverse the membrane as a helical segment; it reads PWVSTEVLAAAIGIVIYYLAF. At 166–173 the chain is on the cytoplasmic side; sequence SAKSHIQA.

It belongs to the TRAP-delta family. As to quaternary structure, heterotetramer of TRAP-alpha, TRAP-beta, TRAP-delta and TRAP-gamma.

Its subcellular location is the endoplasmic reticulum membrane. Its function is as follows. TRAP proteins are part of a complex whose function is to bind calcium to the ER membrane and thereby regulate the retention of ER resident proteins. This is Translocon-associated protein subunit delta (Ssr4) from Rattus norvegicus (Rat).